The following is a 129-amino-acid chain: uncharacterized protein (129 aa).

A compositionally biased stretch (low complexity) spans 1 to 13 (MSDVAETVVAQEP). The disordered stretch occupies residues 1-129 (MSDVAETVVA…SGDAPAVAAE (129 aa)). Residues 34–94 (IDEKTSEQNG…KRVSSAHEEA (61 aa)) show a composition bias toward basic and acidic residues. Residues 117 to 129 (VAASGDAPAVAAE) show a composition bias toward low complexity.

This is an uncharacterized protein from Caenorhabditis elegans.